We begin with the raw amino-acid sequence, 514 residues long: Cardiolipin synthase 2 (514 aa).

3 helical membrane-spanning segments follow: residues 7–27 (LIFFVLLLFALFVSLRMFIDV), 41–61 (ILGIISILFTVSAFLIGCVIF), and 71–91 (LTWLIVLGIFPVFGFFAYLLF). 2 consecutive PLD phosphodiesterase domains span residues 249–276 (INYRNHRKIVIIDGNEGFVGGLNIGDEY) and 427–454 (EKGFLHSKVVIVDSDLASIGTANMDMRS). Residues His254, Lys256, Asp261, His432, Lys434, and Asp439 contribute to the active site.

Belongs to the phospholipase D family. Cardiolipin synthase subfamily.

Its subcellular location is the cell membrane. The enzyme catalyses 2 a 1,2-diacyl-sn-glycero-3-phospho-(1'-sn-glycerol) = a cardiolipin + glycerol. Its function is as follows. Catalyzes the reversible phosphatidyl group transfer from one phosphatidylglycerol molecule to another to form cardiolipin (CL) (diphosphatidylglycerol) and glycerol. The polypeptide is Cardiolipin synthase 2 (cls2) (Bacillus anthracis).